The chain runs to 511 residues: Cytochrome P450 714C3 (511 aa).

Residues Met-1–Ala-6 are Lumenal-facing. The chain crosses the membrane as a helical; Signal-anchor for type III membrane protein span at residues Leu-7–Trp-27. The Cytoplasmic portion of the chain corresponds to Leu-28–Pro-511. Cys-458 contributes to the heme binding site.

The protein belongs to the cytochrome P450 family. Requires heme as cofactor.

It is found in the membrane. This chain is Cytochrome P450 714C3 (CYP714C3), found in Oryza sativa subsp. japonica (Rice).